The primary structure comprises 388 residues: Arginine biosynthesis bifunctional protein ArgJ 2 (388 aa).

Residues T145, K167, T178, E257, and N381 each contribute to the substrate site. Residue T178 is the Nucleophile of the active site.

This sequence belongs to the ArgJ family. In terms of assembly, heterotetramer of two alpha and two beta chains.

The protein resides in the cytoplasm. It catalyses the reaction N(2)-acetyl-L-ornithine + L-glutamate = N-acetyl-L-glutamate + L-ornithine. The enzyme catalyses L-glutamate + acetyl-CoA = N-acetyl-L-glutamate + CoA + H(+). It functions in the pathway amino-acid biosynthesis; L-arginine biosynthesis; L-ornithine and N-acetyl-L-glutamate from L-glutamate and N(2)-acetyl-L-ornithine (cyclic): step 1/1. The protein operates within amino-acid biosynthesis; L-arginine biosynthesis; N(2)-acetyl-L-ornithine from L-glutamate: step 1/4. Functionally, catalyzes two activities which are involved in the cyclic version of arginine biosynthesis: the synthesis of N-acetylglutamate from glutamate and acetyl-CoA as the acetyl donor, and of ornithine by transacetylation between N(2)-acetylornithine and glutamate. This Clostridium acetobutylicum (strain ATCC 824 / DSM 792 / JCM 1419 / IAM 19013 / LMG 5710 / NBRC 13948 / NRRL B-527 / VKM B-1787 / 2291 / W) protein is Arginine biosynthesis bifunctional protein ArgJ 2.